The chain runs to 390 residues: GTPase Obg (390 aa).

The Obg domain maps to 1–159 (MKFVDEAAIL…RDILLELLLL (159 aa)). The OBG-type G domain maps to 160-333 (ADVGMLGLPN…LCWDVMKFIN (174 aa)). Residues 166–173 (GLPNAGKS), 191–195 (FTTLV), 213–216 (DIPG), 283–286 (NKID), and 314–316 (SAV) each bind GTP. Mg(2+)-binding residues include serine 173 and threonine 193. The span at 366–384 (AEADDDWDDDWDEEDDEGV) shows a compositional bias: acidic residues. A disordered region spans residues 366-390 (AEADDDWDDDWDEEDDEGVEIIYQK).

Belongs to the TRAFAC class OBG-HflX-like GTPase superfamily. OBG GTPase family. As to quaternary structure, monomer. It depends on Mg(2+) as a cofactor.

Its subcellular location is the cytoplasm. In terms of biological role, an essential GTPase which binds GTP, GDP and possibly (p)ppGpp with moderate affinity, with high nucleotide exchange rates and a fairly low GTP hydrolysis rate. Plays a role in control of the cell cycle, stress response, ribosome biogenesis and in those bacteria that undergo differentiation, in morphogenesis control. The chain is GTPase Obg from Serratia proteamaculans (strain 568).